We begin with the raw amino-acid sequence, 924 residues long: DNA repair and recombination protein RDH54 (924 aa).

Over residues Met-1–Pro-10 the composition is skewed to basic and acidic residues. Disordered stretches follow at residues Met-1 to Lys-21 and Glu-155 to Gly-183. Positions Thr-168–Thr-178 are enriched in low complexity. The region spanning Leu-299 to Gly-487 is the Helicase ATP-binding domain. Ile-346–Lys-353 contacts ATP. A DEGH box motif is present at residues Asn-472–Asn-475. Lys-615 participates in a covalent cross-link: Glycyl lysine isopeptide (Lys-Gly) (interchain with G-Cter in ubiquitin). In terms of domain architecture, Helicase C-terminal spans Lys-631–Ser-790.

This sequence belongs to the SNF2/RAD54 helicase family. As to quaternary structure, interacts with RAD51 and DMC1.

The protein localises to the nucleus. It catalyses the reaction ATP + H2O = ADP + phosphate + H(+). Its function is as follows. Involved in the recombinational repair of double-strand breaks (DSB) in DNA during mitosis and meiosis. Has DNA dependent ATPase activity. Promotes D-loop (displacement loop) formation with RAD51 recombinase. Modifies the topology of double-stranded DNA during the D-loop reaction to facilitate the invasion of the homologous duplex molecule by the initiating single-stranded DNA substrate. Required for adaptation from G2/M checkpoint arrest induced by a double strand break, by participating in monitoring the extent of single-stranded DNA produced by resection of DNA ends. This role is distinct from its roles in recombination. Promotes colocalization of RAD51 and DMC1 during meiotic recombination. Involved in crossover interference. The sequence is that of DNA repair and recombination protein RDH54 (RDH54) from Saccharomyces cerevisiae (strain JAY291) (Baker's yeast).